We begin with the raw amino-acid sequence, 225 residues long: Glutathione S-transferase Mu 3 (225 aa).

Residues 5–92 (SSMVLGYWDI…YIARKHNMCG (88 aa)) enclose the GST N-terminal domain. Glutathione contacts are provided by residues 11 to 12 (YW), 50 to 54 (WLDVK), and 63 to 64 (NL). K54 is covalently cross-linked (Glycyl lysine isopeptide (Lys-Gly) (interchain with G-Cter in SUMO2)). K73 is covalently cross-linked (Glycyl lysine isopeptide (Lys-Gly) (interchain with G-Cter in SUMO2)). Residue 76 to 77 (QS) participates in glutathione binding. The 119-residue stretch at 94–212 (TEEEKIRVDI…QSDQFFKMPI (119 aa)) folds into the GST C-terminal domain. Y120 is a binding site for substrate.

Belongs to the GST superfamily. Mu family. Homodimer.

The protein localises to the cytoplasm. The enzyme catalyses RX + glutathione = an S-substituted glutathione + a halide anion + H(+). Functionally, conjugation of reduced glutathione to a wide number of exogenous and endogenous hydrophobic electrophiles. May govern uptake and detoxification of both endogenous compounds and xenobiotics at the testis and brain blood barriers. The polypeptide is Glutathione S-transferase Mu 3 (GSTM3) (Macaca fuscata fuscata (Japanese macaque)).